The primary structure comprises 291 residues: Ribosomal RNA small subunit methyltransferase A (291 aa).

S-adenosyl-L-methionine-binding residues include asparagine 33, valine 35, glycine 60, glutamate 81, aspartate 111, and asparagine 129.

It belongs to the class I-like SAM-binding methyltransferase superfamily. rRNA adenine N(6)-methyltransferase family. RsmA subfamily.

The protein resides in the cytoplasm. It carries out the reaction adenosine(1518)/adenosine(1519) in 16S rRNA + 4 S-adenosyl-L-methionine = N(6)-dimethyladenosine(1518)/N(6)-dimethyladenosine(1519) in 16S rRNA + 4 S-adenosyl-L-homocysteine + 4 H(+). Functionally, specifically dimethylates two adjacent adenosines (A1518 and A1519) in the loop of a conserved hairpin near the 3'-end of 16S rRNA in the 30S particle. May play a critical role in biogenesis of 30S subunits. This is Ribosomal RNA small subunit methyltransferase A from Streptomyces griseus subsp. griseus (strain JCM 4626 / CBS 651.72 / NBRC 13350 / KCC S-0626 / ISP 5235).